Consider the following 402-residue polypeptide: Arginine biosynthesis bifunctional protein ArgJ (402 aa).

Residues Thr-149, Lys-175, Thr-186, Glu-266, Asn-397, and Thr-402 each coordinate substrate. Thr-186 (nucleophile) is an active-site residue.

It belongs to the ArgJ family. As to quaternary structure, heterotetramer of two alpha and two beta chains.

It is found in the cytoplasm. It catalyses the reaction N(2)-acetyl-L-ornithine + L-glutamate = N-acetyl-L-glutamate + L-ornithine. The enzyme catalyses L-glutamate + acetyl-CoA = N-acetyl-L-glutamate + CoA + H(+). It functions in the pathway amino-acid biosynthesis; L-arginine biosynthesis; L-ornithine and N-acetyl-L-glutamate from L-glutamate and N(2)-acetyl-L-ornithine (cyclic): step 1/1. The protein operates within amino-acid biosynthesis; L-arginine biosynthesis; N(2)-acetyl-L-ornithine from L-glutamate: step 1/4. In terms of biological role, catalyzes two activities which are involved in the cyclic version of arginine biosynthesis: the synthesis of N-acetylglutamate from glutamate and acetyl-CoA as the acetyl donor, and of ornithine by transacetylation between N(2)-acetylornithine and glutamate. The chain is Arginine biosynthesis bifunctional protein ArgJ from Prochlorococcus marinus subsp. pastoris (strain CCMP1986 / NIES-2087 / MED4).